We begin with the raw amino-acid sequence, 1368 residues long: DNA-directed RNA polymerase subunit beta (1368 aa).

The protein belongs to the RNA polymerase beta chain family. As to quaternary structure, the RNAP catalytic core consists of 2 alpha, 1 beta, 1 beta' and 1 omega subunit. When a sigma factor is associated with the core the holoenzyme is formed, which can initiate transcription.

It carries out the reaction RNA(n) + a ribonucleoside 5'-triphosphate = RNA(n+1) + diphosphate. Its function is as follows. DNA-dependent RNA polymerase catalyzes the transcription of DNA into RNA using the four ribonucleoside triphosphates as substrates. The sequence is that of DNA-directed RNA polymerase subunit beta from Cupriavidus metallidurans (strain ATCC 43123 / DSM 2839 / NBRC 102507 / CH34) (Ralstonia metallidurans).